A 128-amino-acid polypeptide reads, in one-letter code: NADH-quinone oxidoreductase subunit A (128 aa).

The next 3 helical transmembrane spans lie at 5–25, 72–92, and 100–120; these read IPILVLAALAAAFAVVSVVIA, LTAMLFIVFDIEIVFLYPWAV, and FALVEMAIFMLTVFVAYAYVW.

This sequence belongs to the complex I subunit 3 family. In terms of assembly, NDH-1 is composed of 14 different subunits. Subunits NuoA, H, J, K, L, M, N constitute the membrane sector of the complex.

The protein resides in the cell membrane. The catalysed reaction is a quinone + NADH + 5 H(+)(in) = a quinol + NAD(+) + 4 H(+)(out). In terms of biological role, NDH-1 shuttles electrons from NADH, via FMN and iron-sulfur (Fe-S) centers, to quinones in the respiratory chain. The immediate electron acceptor for the enzyme in this species is believed to be a menaquinone. Couples the redox reaction to proton translocation (for every two electrons transferred, four hydrogen ions are translocated across the cytoplasmic membrane), and thus conserves the redox energy in a proton gradient. The chain is NADH-quinone oxidoreductase subunit A from Mycobacterium bovis (strain ATCC BAA-935 / AF2122/97).